Here is a 345-residue protein sequence, read N- to C-terminus: Dihydroorotate dehydrogenase (quinone) (345 aa).

Residues 65–69 and Thr-89 contribute to the FMN site; that span reads AGLDK. Lys-69 is a substrate binding site. Position 114-118 (114-118) interacts with substrate; it reads NRMGF. FMN contacts are provided by Asn-142 and Asn-175. Asn-175 lines the substrate pocket. The active-site Nucleophile is Ser-178. Asn-180 provides a ligand contact to substrate. FMN-binding residues include Lys-220 and Thr-248. 249 to 250 is a substrate binding site; it reads NT. FMN contacts are provided by residues Gly-271, Gly-300, and 321-322; that span reads YT.

This sequence belongs to the dihydroorotate dehydrogenase family. Type 2 subfamily. In terms of assembly, monomer. FMN serves as cofactor.

It is found in the cell membrane. It catalyses the reaction (S)-dihydroorotate + a quinone = orotate + a quinol. Its pathway is pyrimidine metabolism; UMP biosynthesis via de novo pathway; orotate from (S)-dihydroorotate (quinone route): step 1/1. Functionally, catalyzes the conversion of dihydroorotate to orotate with quinone as electron acceptor. The polypeptide is Dihydroorotate dehydrogenase (quinone) (Burkholderia mallei (strain NCTC 10247)).